Consider the following 132-residue polypeptide: Small ribosomal subunit protein uS11 (132 aa).

Belongs to the universal ribosomal protein uS11 family. In terms of assembly, part of the 30S ribosomal subunit.

Functionally, located on the platform of the 30S subunit. The chain is Small ribosomal subunit protein uS11 (rps11) from Korarchaeum cryptofilum (strain OPF8).